The following is a 770-amino-acid chain: Metabotropic glutamate receptor-like protein F (770 aa).

An N-terminal signal peptide occupies residues 1 to 22 (MKIKNFIYFLIYFIFLFKVING). The Extracellular portion of the chain corresponds to 23-370 (QNKTCKISVL…STVDYPESLK (348 aa)). N-linked (GlcNAc...) asparagine glycosylation is found at Asn24, Asn185, Asn260, Asn286, Asn319, and Asn344. A helical membrane pass occupies residues 371–391 (IGVTVVSGFCIFLCLISMIIV). Over 392–405 (IKFKEAKVIKSSSP) the chain is Cytoplasmic. A helical transmembrane segment spans residues 406-426 (IFCLLILFGCIVIFVGCIMFA). Residues 427-442 (RSPTDGSCRSRVWLLS) lie on the Extracellular side of the membrane. The chain crosses the membrane as a helical span at residues 443 to 463 (LGYTIFLGNLMVKNWRIWLLF). The Cytoplasmic segment spans residues 464 to 483 (DNPKLKKRAITNWKLYPWVS). Residues 484–504 (GIVIIDIVILSIWQALGDIVA) traverse the membrane as a helical segment. Over 505 to 528 (ESRTGIDSLTKYEYRNVCASSDQG) the chain is Extracellular. Residues 529 to 549 (SIALYLLLVFHGLILLVACFI) form a helical membrane-spanning segment. The Cytoplasmic portion of the chain corresponds to 550–565 (SFKIKVVDIEEFNESK). The helical transmembrane segment at 566–586 (PITTSVYIITFCLFIVIPIMV) threads the bilayer. Topologically, residues 587-594 (SSPTVTTQ) are extracellular. Residues 595–615 (TTIICICALITTMLSIILLFG) form a helical membrane-spanning segment. The Cytoplasmic segment spans residues 616 to 770 (TKFFKMITVG…GQTEIDSNDV (155 aa)). The tract at residues 639–740 (SSHSQRTKSS…EEKQKDEEEI (102 aa)) is disordered. 2 stretches are compositionally biased toward basic and acidic residues: residues 676–693 (SSEKEKKKPIESNPKDHM) and 730–740 (NEEKQKDEEEI). Residues 715 to 760 (REQINDNIILENNNDNEEKQKDEEEIKEEKLLVSEIQAKRLSLEQN) are a coiled coil.

The protein in the N-terminal section; belongs to the BMP lipoprotein family. It in the C-terminal section; belongs to the G-protein coupled receptor 3 family. GABA-B receptor subfamily.

It localises to the membrane. The sequence is that of Metabotropic glutamate receptor-like protein F (grlF) from Dictyostelium discoideum (Social amoeba).